A 65-amino-acid polypeptide reads, in one-letter code: Large ribosomal subunit protein bL31 (65 aa).

Residues Cys-16, Cys-18, Cys-36, and Cys-39 each coordinate Zn(2+).

It belongs to the bacterial ribosomal protein bL31 family. Type A subfamily. In terms of assembly, part of the 50S ribosomal subunit. Zn(2+) serves as cofactor.

In terms of biological role, binds the 23S rRNA. This chain is Large ribosomal subunit protein bL31, found in Brevibacillus brevis (strain 47 / JCM 6285 / NBRC 100599).